Reading from the N-terminus, the 278-residue chain is 4-diphosphocytidyl-2-C-methyl-D-erythritol kinase (278 aa).

Lys-10 is a catalytic residue. 93–103 (PMGGGLGGGSS) is an ATP binding site. Residue Asp-135 is part of the active site.

Belongs to the GHMP kinase family. IspE subfamily.

The catalysed reaction is 4-CDP-2-C-methyl-D-erythritol + ATP = 4-CDP-2-C-methyl-D-erythritol 2-phosphate + ADP + H(+). The protein operates within isoprenoid biosynthesis; isopentenyl diphosphate biosynthesis via DXP pathway; isopentenyl diphosphate from 1-deoxy-D-xylulose 5-phosphate: step 3/6. Functionally, catalyzes the phosphorylation of the position 2 hydroxy group of 4-diphosphocytidyl-2C-methyl-D-erythritol. The polypeptide is 4-diphosphocytidyl-2-C-methyl-D-erythritol kinase (Thiobacillus denitrificans (strain ATCC 25259 / T1)).